The chain runs to 155 residues: Non-secretory ribonuclease (155 aa).

Positions 1–25 (MGPKLLESRLCLLLLLGLVLMLASC) are cleaved as a signal peptide. Lys-33 contacts substrate. His-38 acts as the Proton acceptor in catalysis. Asn-41 carries an N-linked (GlcNAc...) asparagine glycan. Disulfide bonds link Cys-47–Cys-106, Cys-61–Cys-118, Cys-79–Cys-133, and Cys-86–Cys-94. Tyr-57 carries the 3'-nitrotyrosine modification. 62-66 (KDINT) contacts substrate. N-linked (GlcNAc...) asparagine glycans are attached at residues Asn-83, Asn-88, and Asn-107. The active-site Proton donor is His-150.

The protein belongs to the pancreatic ribonuclease family. As to quaternary structure, interacts with and forms a tight 1:1 complex with RNH1. Dimerization of two such complexes may occur.

Its subcellular location is the lysosome. The protein resides in the cytoplasmic granule. The enzyme catalyses an [RNA] containing cytidine + H2O = an [RNA]-3'-cytidine-3'-phosphate + a 5'-hydroxy-ribonucleotide-3'-[RNA].. The catalysed reaction is an [RNA] containing uridine + H2O = an [RNA]-3'-uridine-3'-phosphate + a 5'-hydroxy-ribonucleotide-3'-[RNA].. Functionally, this is a non-secretory ribonuclease. It is a pyrimidine specific nuclease with a slight preference for U. Cytotoxin and helminthotoxin. Possesses a wide variety of biological activities. The sequence is that of Non-secretory ribonuclease (Rnase2) from Mus musculus (Mouse).